A 289-amino-acid polypeptide reads, in one-letter code: ATP synthase gamma chain (289 aa).

The protein belongs to the ATPase gamma chain family. In terms of assembly, F-type ATPases have 2 components, CF(1) - the catalytic core - and CF(0) - the membrane proton channel. CF(1) has five subunits: alpha(3), beta(3), gamma(1), delta(1), epsilon(1). CF(0) has three main subunits: a, b and c.

It is found in the cell inner membrane. Functionally, produces ATP from ADP in the presence of a proton gradient across the membrane. The gamma chain is believed to be important in regulating ATPase activity and the flow of protons through the CF(0) complex. This is ATP synthase gamma chain from Halorhodospira halophila (strain DSM 244 / SL1) (Ectothiorhodospira halophila (strain DSM 244 / SL1)).